The sequence spans 406 residues: Multifunctional CCA protein (406 aa).

ATP contacts are provided by Gly8 and Arg11. Positions 8 and 11 each coordinate CTP. Residues Glu21 and Asp23 each contribute to the Mg(2+) site. The ATP site is built by Arg91, Arg137, and Arg140. Arg91, Arg137, and Arg140 together coordinate CTP. Residues 225–326 (TGIHTLKVLE…LKLLNRVDAF (102 aa)) enclose the HD domain.

This sequence belongs to the tRNA nucleotidyltransferase/poly(A) polymerase family. Bacterial CCA-adding enzyme type 1 subfamily. In terms of assembly, monomer. Can also form homodimers and oligomers. Mg(2+) serves as cofactor. The cofactor is Ni(2+).

The catalysed reaction is a tRNA precursor + 2 CTP + ATP = a tRNA with a 3' CCA end + 3 diphosphate. It carries out the reaction a tRNA with a 3' CCA end + 2 CTP + ATP = a tRNA with a 3' CCACCA end + 3 diphosphate. Functionally, catalyzes the addition and repair of the essential 3'-terminal CCA sequence in tRNAs without using a nucleic acid template. Adds these three nucleotides in the order of C, C, and A to the tRNA nucleotide-73, using CTP and ATP as substrates and producing inorganic pyrophosphate. tRNA 3'-terminal CCA addition is required both for tRNA processing and repair. Also involved in tRNA surveillance by mediating tandem CCA addition to generate a CCACCA at the 3' terminus of unstable tRNAs. While stable tRNAs receive only 3'-terminal CCA, unstable tRNAs are marked with CCACCA and rapidly degraded. This Nitrosococcus oceani (strain ATCC 19707 / BCRC 17464 / JCM 30415 / NCIMB 11848 / C-107) protein is Multifunctional CCA protein.